Consider the following 487-residue polypeptide: Transmembrane protein 161B (487 aa).

Residue asparagine 34 is glycosylated (N-linked (GlcNAc...) asparagine). Residues 107 to 127 traverse the membrane as a helical segment; sequence LVDFTVAATIVYLVTEVYYSF. Asparagine 135 carries N-linked (GlcNAc...) asparagine glycosylation. A run of 2 helical transmembrane segments spans residues 136–156 and 169–189; these read ISLVWCLLVLSFAIKVLFSLT and SVCVTFGFFFFVKAMAVLIVT. Asparagine 203 carries N-linked (GlcNAc...) asparagine glycosylation. Helical transmembrane passes span 228-248, 265-285, 305-325, 367-387, and 459-479; these read FKFFLAVFCSLIGAFLTFPGL, ITQTLLHINFLAPLFMVLLWV, LMTEATFDTLRLWLIILLCVL, VFYYLCVIALQYVAPLVMLLH, and LSFLTWWIAACLFSTSLFGLF.

Belongs to the TMEM161 family.

The protein localises to the cell membrane. In terms of biological role, essential for maintaining normal cardiac rhythm in the developing heart and for neonatal survival. Inhibits potassium and calcium currents in the cardiomyocytes, this assists in timely action potential repolarization and thereby maintains normal cardiac rhythm. The sequence is that of Transmembrane protein 161B (Tmem161b) from Mus musculus (Mouse).